The sequence spans 324 residues: Phospho-N-acetylmuramoyl-pentapeptide-transferase (324 aa).

A run of 10 helical transmembrane segments spans residues 5-25 (VILF…PILI), 50-70 (GTPT…AIVM), 77-97 (LSAE…LGFL), 117-137 (LIGQ…CHFS), 147-167 (LSID…VGGS), 176-196 (LDGL…ILAW), 203-223 (VAIF…FNAH), 227-247 (VFMG…VAIL), 250-270 (LEIL…SVIL), and 302-322 (VVVT…YIEV).

This sequence belongs to the glycosyltransferase 4 family. MraY subfamily. Mg(2+) is required as a cofactor.

The protein resides in the cell membrane. The enzyme catalyses UDP-N-acetyl-alpha-D-muramoyl-L-alanyl-gamma-D-glutamyl-meso-2,6-diaminopimeloyl-D-alanyl-D-alanine + di-trans,octa-cis-undecaprenyl phosphate = di-trans,octa-cis-undecaprenyl diphospho-N-acetyl-alpha-D-muramoyl-L-alanyl-D-glutamyl-meso-2,6-diaminopimeloyl-D-alanyl-D-alanine + UMP. The protein operates within cell wall biogenesis; peptidoglycan biosynthesis. Catalyzes the initial step of the lipid cycle reactions in the biosynthesis of the cell wall peptidoglycan: transfers peptidoglycan precursor phospho-MurNAc-pentapeptide from UDP-MurNAc-pentapeptide onto the lipid carrier undecaprenyl phosphate, yielding undecaprenyl-pyrophosphoryl-MurNAc-pentapeptide, known as lipid I. This Bacillus velezensis (strain DSM 23117 / BGSC 10A6 / LMG 26770 / FZB42) (Bacillus amyloliquefaciens subsp. plantarum) protein is Phospho-N-acetylmuramoyl-pentapeptide-transferase.